The primary structure comprises 448 residues: Proton extrusion protein PxcA (448 aa).

Transmembrane regions (helical) follow at residues 231–251 (ILLL…FFLI), 323–343 (IDSI…VLVL), 372–392 (LIIL…WEVI), and 408–428 (FNFL…KYWI).

Belongs to the CemA family.

Its subcellular location is the cell inner membrane. Its function is as follows. Required for H(+) efflux immediately after light irradiation to form a rapid H(+) concentration gradient across the thylakoid membranes. Together with PxcL, contributes to transient H(+) uptake following dark to light transition. The chain is Proton extrusion protein PxcA from Rippkaea orientalis (strain PCC 8801 / RF-1) (Cyanothece sp. (strain PCC 8801)).